Consider the following 556-residue polypeptide: Formate--tetrahydrofolate ligase (556 aa).

ATP is bound at residue Thr-65–Ser-72.

Belongs to the formate--tetrahydrofolate ligase family.

It carries out the reaction (6S)-5,6,7,8-tetrahydrofolate + formate + ATP = (6R)-10-formyltetrahydrofolate + ADP + phosphate. The protein operates within one-carbon metabolism; tetrahydrofolate interconversion. The chain is Formate--tetrahydrofolate ligase from Streptococcus suis (strain 98HAH33).